Consider the following 425-residue polypeptide: Nuclear pore complex-interacting protein family member B6 (425 aa).

The segment at 332 to 414 is disordered; that stretch reads SPLPPSVDDN…RRLSKLRTRH (83 aa). A compositionally biased stretch (basic and acidic residues) spans 353–395; the sequence is EVEKPPKPKRWRVDEVEQSPKPKRRRVDEVEQSPKPKRQREAE. Over residues 401–414 the composition is skewed to basic residues; sequence KPKRRRLSKLRTRH.

The protein belongs to the NPIP family.

The polypeptide is Nuclear pore complex-interacting protein family member B6 (NPIPB6) (Homo sapiens (Human)).